A 702-amino-acid chain; its full sequence is Translation factor GUF1 homolog, chloroplastic (702 aa).

Low complexity predominate over residues 1–30 (MASAAPASRGAARASTAARDAPFAAAARGP). Residues 1-41 (MASAAPASRGAARASTAARDAPFAAAARGPGRFRRDGNGRN) are disordered. Residues 87–283 (SQIRNFSIIA…NIVKMIPPPP (197 aa)) form the tr-type G domain. Residues 96 to 103 (AHIDHGKS), 162 to 166 (DTPGH), and 216 to 219 (NKID) each bind GTP.

It belongs to the TRAFAC class translation factor GTPase superfamily. Classic translation factor GTPase family. LepA subfamily.

Its subcellular location is the plastid. It is found in the chloroplast. It carries out the reaction GTP + H2O = GDP + phosphate + H(+). In terms of biological role, promotes chloroplast protein synthesis. May act as a fidelity factor of the translation reaction, by catalyzing a one-codon backward translocation of tRNAs on improperly translocated ribosomes. The protein is Translation factor GUF1 homolog, chloroplastic of Micromonas pusilla (strain CCMP1545) (Picoplanktonic green alga).